The sequence spans 342 residues: Nucleoid-associated protein Sbal223_1817 (342 aa).

It belongs to the YejK family.

It is found in the cytoplasm. The protein resides in the nucleoid. This is Nucleoid-associated protein Sbal223_1817 from Shewanella baltica (strain OS223).